Reading from the N-terminus, the 988-residue chain is MGMRPNGALPRLTRRSRRLVAASLVIVVLLLIGPRLVDTYINWLWFGELGFRGVFTTVLLTRLALFLIVGTLVAAVVFAGFGLAYRARPVFVPAKGPGDALAQYRALILSRVRLFLIGVPILIGVLAGVVAQSYWMPVQLFLEGGDFGIKDPQFGLDLGFFAFDLPFYRFVLTYLFIAASIALIVNGLVHYIFGGIRLSGRSGTLSRPARIQLITFAGILVLLKVAAYWLDRYELLSHTRAGKPFTGAGYTDINAVLPAKLILLAIAVICAVAVFSALVLKDLRIPAIGLALLLLSSLVVGAGWPLIVEQFSVKPNAAQKESEYIARSIKATRDAYGLTDDVVTYRDYSGTASSPAGSQQLAKQVAADRSTIANIRVLDPNIISPAFTQLQQGKNFYAFPDALSIDRYQDKNGSLRDYVVAARELDPAKLRDNQRDWINRHTVYTHGNGFIAAPANTVRGVADKPDENGGYPEFLVNAVDDNGKVLSDGPAPLAQPRVYYGPIIASDTNDYAIVGKNGNDREYDYENNAGTKNSTYTGSGGVPVGGALARTVFGLKYAERNFLFSNVIGDNSKILFNRDPSRRVEAVAPWLTVDSGTYPAIVDKRLVWIVDGYTTLDNYPYSQQTSLSEATFDSQVGRTGGALPNQQVSYIRNSVKATVDAYDGTVTLYQQDEKDPVLKAWMKIFPGTVKPKADISDDLKRHLRYPEDLFKVQRTLLARYHVNDPVTFFSTSDFWQVPDDPNAPTGSQPPYYIVAKDITKNDNSASFQLTSALNRFQRDFLAAYVSASSDPETYGKITVLTVPGTVQGPKLVNNAITTDNQVSSHVGIIKNQNILKWGNLLTLPVANGGLLFVEPLYASPGQGDQSSYPRLIRVGMYYNGKVGYATTVRDALDMVFGPGAGATATAPAVEPGAMPPAPPGGQNVPVVPPVTPPPTGSAELSSAKAAALQEVQRAIGEVKEAQKSGDFARYGQALKGLDDAMTKFTQAR.

Helical transmembrane passes span 19 to 39, 63 to 83, 114 to 134, 176 to 196, 211 to 231, 260 to 280, and 288 to 308; these read LVAA…LVDT, LALF…GFGL, LFLI…AQSY, FIAA…FGGI, IQLI…YWLD, KLIL…ALVL, and IGLA…PLIV.

Belongs to the UPF0182 family.

It localises to the cell membrane. This chain is UPF0182 protein MAB_3498c, found in Mycobacteroides abscessus (strain ATCC 19977 / DSM 44196 / CCUG 20993 / CIP 104536 / JCM 13569 / NCTC 13031 / TMC 1543 / L948) (Mycobacterium abscessus).